A 295-amino-acid chain; its full sequence is Methionine aminopeptidase (295 aa).

His62 contacts substrate. 3 residues coordinate a divalent metal cation: Asp82, Asp93, and His153. His161 contacts substrate. The a divalent metal cation site is built by Glu187 and Glu280.

It belongs to the peptidase M24A family. Methionine aminopeptidase archaeal type 2 subfamily. Monomer. The cofactor is Co(2+). Zn(2+) is required as a cofactor. Requires Mn(2+) as cofactor. Fe(2+) serves as cofactor.

The enzyme catalyses Release of N-terminal amino acids, preferentially methionine, from peptides and arylamides.. Removes the N-terminal methionine from nascent proteins. The N-terminal methionine is often cleaved when the second residue in the primary sequence is small and uncharged (Met-Ala-, Cys, Gly, Pro, Ser, Thr, or Val). The chain is Methionine aminopeptidase from Pyrococcus horikoshii (strain ATCC 700860 / DSM 12428 / JCM 9974 / NBRC 100139 / OT-3).